We begin with the raw amino-acid sequence, 79 residues long: Sec-independent protein translocase protein TatA (79 aa).

A helical transmembrane segment spans residues 1–21; sequence MGGWSSPSHWLIILLIVVLLF. Residues 52–61 show a composition bias toward basic and acidic residues; it reads KNTQKIEENK. A disordered region spans residues 52-79; sequence KNTQKIEENKNTTNNTSADASIDKTKKA.

This sequence belongs to the TatA/E family. As to quaternary structure, the Tat system comprises two distinct complexes: a TatABC complex, containing multiple copies of TatA, TatB and TatC subunits, and a separate TatA complex, containing only TatA subunits. Substrates initially bind to the TatABC complex, which probably triggers association of the separate TatA complex to form the active translocon.

The protein localises to the cell inner membrane. In terms of biological role, part of the twin-arginine translocation (Tat) system that transports large folded proteins containing a characteristic twin-arginine motif in their signal peptide across membranes. TatA could form the protein-conducting channel of the Tat system. The sequence is that of Sec-independent protein translocase protein TatA from Campylobacter jejuni subsp. jejuni serotype O:6 (strain 81116 / NCTC 11828).